The chain runs to 969 residues: Liprin-beta-1 (969 aa).

The residue at position 37 (Ser37) is a Phosphoserine. The residue at position 39 (Thr39) is a Phosphothreonine. A Phosphoserine modification is found at Ser40. The stretch at Gly99 to Asp310 forms a coiled coil. N6-acetyllysine is present on Lys291. 3 disordered regions span residues Asp342–Leu361, Leu381–Gly407, and Gly424–Arg482. The segment covering Ser346–Arg358 has biased composition (low complexity). Phosphoserine occurs at positions 403 and 435. Low complexity predominate over residues Ser426–Asn438. The span at Leu439–Thr452 shows a compositional bias: basic and acidic residues. Lys440 participates in a covalent cross-link: Glycyl lysine isopeptide (Lys-Gly) (interchain with G-Cter in SUMO2). Ser500 bears the Phosphoserine mark. Positions Ala518 to Thr529 are enriched in polar residues. The interval Ala518–Gly593 is disordered. Ser538 carries the post-translational modification Phosphoserine. A compositionally biased stretch (basic residues) spans Lys543–Arg557. Residues Ser560 and Ser595 each carry the phosphoserine modification. 2 SAM domains span residues Trp606–Glu670 and Leu678–Asn741. Phosphoserine is present on residues Ser753 and Ser757. The 73-residue stretch at Val763 to Ala835 folds into the SAM 3 domain. Phosphoserine occurs at positions 957, 959, and 961. Thr963 carries the post-translational modification Phosphothreonine.

The protein belongs to the liprin family. Liprin-beta subfamily. In terms of assembly, forms homodimers and heterodimers. Interacts with S100A4 in a Ca(2+)-dependent mode. Part of a cortical microtubule stabilization complex (CMSC) composed of KANK1, PPFIA1, PPFIBP1, ERC1/ELKS, PHLDB2/LL5beta, CLASPs, KIF21A and possibly additional interactors; within CMSCs KANK1 and PHLDB2/LL5beta seem to be the core components for recruiting microtubule-binding proteins KIF21A and CLASPs, whereas PPFIA1, PPFIBP1 and ERC1/ELKS serve as scaffolds for protein clustering. Interacts with KANK1 (via CC1 domain, residues 244-339).

Its subcellular location is the cytoplasm. It is found in the cell cortex. May regulate the disassembly of focal adhesions. Did not bind receptor-like tyrosine phosphatases type 2A. In Mus musculus (Mouse), this protein is Liprin-beta-1 (Ppfibp1).